Reading from the N-terminus, the 252-residue chain is Hydroxyacylglutathione hydrolase (252 aa).

Residues histidine 52, histidine 54, aspartate 56, histidine 57, histidine 107, aspartate 128, and histidine 166 each coordinate Zn(2+).

It belongs to the metallo-beta-lactamase superfamily. Glyoxalase II family. In terms of assembly, monomer. Zn(2+) is required as a cofactor.

The enzyme catalyses an S-(2-hydroxyacyl)glutathione + H2O = a 2-hydroxy carboxylate + glutathione + H(+). The protein operates within secondary metabolite metabolism; methylglyoxal degradation; (R)-lactate from methylglyoxal: step 2/2. Thiolesterase that catalyzes the hydrolysis of S-D-lactoyl-glutathione to form glutathione and D-lactic acid. The polypeptide is Hydroxyacylglutathione hydrolase (Neisseria meningitidis serogroup C / serotype 2a (strain ATCC 700532 / DSM 15464 / FAM18)).